A 111-amino-acid polypeptide reads, in one-letter code: Probable 4-amino-4-deoxy-L-arabinose-phosphoundecaprenol flippase subunit ArnE (111 aa).

The next 3 membrane-spanning stretches (helical) occupy residues 38–58 (LWLG…LLVL), 61–81 (LPVG…TLAA), and 91–111 (PRHW…GSAA). An EamA domain is found at 40–109 (LGLALICMGA…IISGIIILGS (70 aa)).

The protein belongs to the ArnE family. Heterodimer of ArnE and ArnF.

The protein localises to the cell inner membrane. It participates in bacterial outer membrane biogenesis; lipopolysaccharide biosynthesis. In terms of biological role, translocates 4-amino-4-deoxy-L-arabinose-phosphoundecaprenol (alpha-L-Ara4N-phosphoundecaprenol) from the cytoplasmic to the periplasmic side of the inner membrane. The sequence is that of Probable 4-amino-4-deoxy-L-arabinose-phosphoundecaprenol flippase subunit ArnE from Salmonella newport (strain SL254).